We begin with the raw amino-acid sequence, 336 residues long: Dihydroorotate dehydrogenase (quinone) (336 aa).

FMN is bound by residues 62–66 and T86; that span reads AGLDK. K66 contacts substrate. 111–115 contacts substrate; the sequence is NRMGF. 2 residues coordinate FMN: N139 and N172. Substrate is bound at residue N172. The active-site Nucleophile is S175. N177 lines the substrate pocket. Residues K217 and T245 each contribute to the FMN site. Position 246 to 247 (246 to 247) interacts with substrate; that stretch reads NT. FMN-binding positions include G268, G297, and 318 to 319; that span reads YS.

It belongs to the dihydroorotate dehydrogenase family. Type 2 subfamily. In terms of assembly, monomer. The cofactor is FMN.

The protein localises to the cell membrane. The enzyme catalyses (S)-dihydroorotate + a quinone = orotate + a quinol. The protein operates within pyrimidine metabolism; UMP biosynthesis via de novo pathway; orotate from (S)-dihydroorotate (quinone route): step 1/1. Functionally, catalyzes the conversion of dihydroorotate to orotate with quinone as electron acceptor. This chain is Dihydroorotate dehydrogenase (quinone), found in Psychromonas ingrahamii (strain DSM 17664 / CCUG 51855 / 37).